The primary structure comprises 131 residues: Small ribosomal subunit protein uS8 (131 aa).

This sequence belongs to the universal ribosomal protein uS8 family. As to quaternary structure, part of the 30S ribosomal subunit. Contacts proteins S5 and S12.

Functionally, one of the primary rRNA binding proteins, it binds directly to 16S rRNA central domain where it helps coordinate assembly of the platform of the 30S subunit. The chain is Small ribosomal subunit protein uS8 from Chromobacterium violaceum (strain ATCC 12472 / DSM 30191 / JCM 1249 / CCUG 213 / NBRC 12614 / NCIMB 9131 / NCTC 9757 / MK).